A 431-amino-acid chain; its full sequence is 5-methylthioadenosine/S-adenosylhomocysteine deaminase (431 aa).

Zn(2+) is bound by residues histidine 66 and histidine 68. Glutamate 95, arginine 147, and histidine 185 together coordinate substrate. Position 212 (histidine 212) interacts with Zn(2+). Substrate contacts are provided by glutamate 215 and aspartate 300. Aspartate 300 lines the Zn(2+) pocket.

The protein belongs to the metallo-dependent hydrolases superfamily. MTA/SAH deaminase family. It depends on Zn(2+) as a cofactor.

The enzyme catalyses S-adenosyl-L-homocysteine + H2O + H(+) = S-inosyl-L-homocysteine + NH4(+). It carries out the reaction S-methyl-5'-thioadenosine + H2O + H(+) = S-methyl-5'-thioinosine + NH4(+). Catalyzes the deamination of 5-methylthioadenosine and S-adenosyl-L-homocysteine into 5-methylthioinosine and S-inosyl-L-homocysteine, respectively. Is also able to deaminate adenosine. This is 5-methylthioadenosine/S-adenosylhomocysteine deaminase from Desulfitobacterium hafniense (strain Y51).